A 553-amino-acid chain; its full sequence is Protein TIC 55, chloroplastic (553 aa).

The N-terminal 60 residues, 1–60 (MALALASANSFLLPTKTHFALHVSPPPSKKTLLCTNPSSNFSFNKALSSRRRKQAWCVAA), are a transit peptide targeting the chloroplast. Residues 61–492 (AADVKDATLL…GCSSAIKAFQ (432 aa)) are Stromal-facing. The region spanning 103-208 (WYPLYLTKNV…VRDSQGVLWV (106 aa)) is the Rieske domain. [2Fe-2S] cluster-binding residues include Cys-144, His-146, Cys-163, and His-166. Residues His-257 and His-262 each contribute to the Fe cation site. A helical membrane pass occupies residues 493-513 (IWKNVLSGVVVALAALAILVS). At 514-518 (GRQWK) the chain is on the chloroplast intermembrane side. The chain crosses the membrane as a helical span at residues 519 to 539 (VLLLASASLCSVGVYACSTAI). Over 540-553 (AMNTTNFIRVHRRL) the chain is Stromal.

Part of the Tic complex. Interacts with TIC62 and TIC110. [2Fe-2S] cluster is required as a cofactor.

The protein resides in the plastid. It localises to the chloroplast inner membrane. Involved in protein precursor import into chloroplasts. Part of the redox regulon consisting of TIC32, TIC 55 and TIC62. The chain is Protein TIC 55, chloroplastic (TIC55) from Pisum sativum (Garden pea).